The primary structure comprises 184 residues: uncharacterized protein (184 aa).

Positions 1–23 are cleaved as a signal peptide; the sequence is MFCLLHLCFYLANFASSIKRTHA.

It localises to the secreted. This is an uncharacterized protein from Homo sapiens (Human).